A 304-amino-acid polypeptide reads, in one-letter code: N-carbamoyl-D-amino acid hydrolase (304 aa).

Residues 5 to 276 form the CN hydrolase domain; the sequence is MILAVGQQGP…DEVITAAVCL (272 aa). Catalysis depends on residues E47, K127, and C172.

In terms of assembly, homotetramer.

The enzyme catalyses an N-carbamoyl-D-amino acid + H2O + 2 H(+) = a D-alpha-amino acid + NH4(+) + CO2. With respect to regulation, the activity decreases with increasing concentration of H(2)O(2). Has 68% and 43% of activity remaining upon treatment with 0.1 and 0.2 mM H(2)O(2) for 30 minutes, respectively. Inhibited significantly by 2 mM Zn(2+), Cu(2+) and Ag(+), moderately by Co(2+), Mn(2+), Sn(2+) and Mg(2+), and only slightly by Ba(2+). Slightly activated by Fe(2+) and Ca(2+). No effect on activity by metal chelators EDTA and 8-hydroxyquinoline at 2 mM or by dithiothreitol, 2-mercaptoethanol or phenylmethanesulfonyl fluoride. Functionally, catalyzes the hydrolysis of N-carbamoyl-D-amino acids to the corresponding D-amino acids. Hydrolyzes aromatic and aliphatic N-carbamoyl-D-amino acids in vitro. Effectively hydrolyzes N-carbamoyl-D-p-hydroxyphenylglycine and N-carbamoyl-DL-p-hydroxyphenylglycine, and to a lesser extent N-carbamoyl-D-methionine. No activity for N-carbamoyl-L-amino acids, N-carbamoyl-beta-alanine or (RS)-alpha-ethyl-N-carbamoylphenylglycine in vitro. The sequence is that of N-carbamoyl-D-amino acid hydrolase from Ensifer adhaerens (Sinorhizobium morelense).